The primary structure comprises 505 residues: Protein disulfide-isomerase A3 (505 aa).

The signal sequence occupies residues 1–24 (MRFSCLALLPGVALLLASALLASA). The Thioredoxin 1 domain occupies 25–133 (SDVLELTDEN…IVSHLKKQAG (109 aa)). Active-site nucleophile residues include C57 and C60. A disulfide bond links C57 and C60. K61 carries the N6-methyllysine modification. A disulfide bridge links C85 with C92. N6-succinyllysine is present on K129. An N6-acetyllysine modification is found at K152. K218 carries the post-translational modification N6-succinyllysine. K252 carries the post-translational modification N6-acetyllysine. At T319 the chain carries Phosphothreonine. A Thioredoxin 2 domain is found at 343–485 (SRDGKALERF…FISYLQREAT (143 aa)). Position 362 is an N6-acetyllysine (K362). Catalysis depends on nucleophile residues C406 and C409. A disulfide bridge links C406 with C409. The tract at residues 484–505 (ATNPPIIQEEKPKKKKKAQEDL) is disordered. A compositionally biased stretch (basic and acidic residues) spans 491–505 (QEEKPKKKKKAQEDL). K494 bears the N6-acetyllysine mark. Positions 502–505 (QEDL) match the Prevents secretion from ER motif.

It belongs to the protein disulfide isomerase family. In terms of assembly, part of the major histocompatibility complex class I (MHC I) peptide loading complex composed of TAP1, TAP2, B2M, MHC heavy chain, TAPBP, PDIA3, and CALR. Interacts with ERP27 and CANX. Interacts with SERPINA2 and with SERPINA1. Interacts with ATP2A2. Within the major histocompatibility complex class I (MHC I) peptide loading complex forms reversible disulfide-linked heterodimers with TAPBP as part of its protein folding chaperone activity. This is essential to assist the dynamic assembly of the MHC I complex with high affinity antigens in the endoplasmic reticulum. In terms of processing, phosphorylated. As to expression, in caput epididymal spermatozoa, detected in the head, mid and principal pieces. In cauda epididymal spermatozoa detected only in the acrosome (at protein level).

The protein resides in the endoplasmic reticulum. Its subcellular location is the endoplasmic reticulum lumen. The protein localises to the melanosome. The catalysed reaction is Catalyzes the rearrangement of -S-S- bonds in proteins.. With respect to regulation, seems to be inhibited by acidic phospholipids. In terms of biological role, protein disulfide isomerase that catalyzes the formation, isomerization, and reduction or oxidation of disulfide bonds in client proteins and functions as a protein folding chaperone. Core component of the major histocompatibility complex class I (MHC I) peptide loading complex where it functions as an essential folding chaperone for TAPBP. Through TAPBP, assists the dynamic assembly of the MHC I complex with high affinity antigens in the endoplasmic reticulum. Therefore, plays a crucial role in the presentation of antigens to cytotoxic T cells in adaptive immunity. The polypeptide is Protein disulfide-isomerase A3 (Pdia3) (Rattus norvegicus (Rat)).